The primary structure comprises 25 residues: GWASKIGQTLGKMAKVGLQELIQPK.

As to expression, expressed by the skin glands.

It is found in the secreted. In terms of biological role, antimicrobial peptide. The protein is Xenoposin precursor fragment R2 of Xenopus ruwenzoriensis (Uganda clawed frog).